A 155-amino-acid polypeptide reads, in one-letter code: F-box only protein 48 (155 aa).

The segment at 1–27 is disordered; the sequence is MHKNSKRNNNLRVSHTEANSVDAEKEK. Residues 7–19 show a composition bias toward polar residues; the sequence is RNNNLRVSHTEAN. The F-box domain occupies 32–79; that stretch reads NNFFELLPAEITFKIFSQLDIRSLCRASLTCRSWNDTIRNSDSLWKPH.

The polypeptide is F-box only protein 48 (FBXO48) (Homo sapiens (Human)).